The primary structure comprises 203 residues: N-(5'-phosphoribosyl)anthranilate isomerase (203 aa).

This sequence belongs to the TrpF family.

The catalysed reaction is N-(5-phospho-beta-D-ribosyl)anthranilate = 1-(2-carboxyphenylamino)-1-deoxy-D-ribulose 5-phosphate. Its pathway is amino-acid biosynthesis; L-tryptophan biosynthesis; L-tryptophan from chorismate: step 3/5. The protein is N-(5'-phosphoribosyl)anthranilate isomerase of Geobacter sulfurreducens (strain ATCC 51573 / DSM 12127 / PCA).